The chain runs to 95 residues: uncharacterized protein (95 aa).

The region spanning 2–92 (VREAAMLHIK…YTPFPTVEHF (91 aa)) is the ABM domain.

This is an uncharacterized protein from Bacillus subtilis (strain 168).